Here is a 431-residue protein sequence, read N- to C-terminus: Probable carboxylic ester hydrolase LipM (431 aa).

3 consecutive transmembrane segments (helical) span residues 7-27, 38-58, and 75-95; these read IHVI…AATI, FASL…LPTL, and PVRA…LNLS. Active-site residues include serine 261, aspartate 357, and histidine 390.

This sequence belongs to the 'GDXG' lipolytic enzyme family.

It is found in the membrane. The protein is Probable carboxylic ester hydrolase LipM of Mycobacterium tuberculosis (strain ATCC 25618 / H37Rv).